An 849-amino-acid polypeptide reads, in one-letter code: Formin-like protein 4 (849 aa).

An N-terminal signal peptide occupies residues 1–22 (MPPTLALLLFLALSAVAAVGGA). The disordered stretch occupies residues 36-104 (IEWTPPPSTA…RARGGGGGGT (69 aa)). The segment covering 38–52 (WTPPPSTASPSPPSP) has biased composition (pro residues). Positions 53–64 (DFSSDPSTPATP) are enriched in low complexity. The chain crosses the membrane as a helical span at residues 109–129 (IVVASAAAAAVLALLAFAAAF). Residues 185-194 (ARRGMCRDVD) show a composition bias toward basic and acidic residues. The disordered stretch occupies residues 185 to 364 (ARRGMCRDVD…PEPPTGPVSA (180 aa)). Positions 234–246 (GSGGGGGGEGGGT) are enriched in gly residues. A compositionally biased stretch (low complexity) spans 247-279 (WSEASASSPRTTTASRRSLPSLTSDFFPTTPAA). Composition is skewed to pro residues over residues 280–297 (APVPAPAAAAPPPAPPAP), 324–339 (PSNPPPAPPPPPPPPS), and 346–360 (PKPPPPPPPPEPPTG). Residues 406–823 (EAAGDEPRPK…SARSFRISAA (418 aa)) enclose the FH2 domain.

Belongs to the formin-like family. Class-I subfamily.

It is found in the membrane. This chain is Formin-like protein 4 (FH4), found in Oryza sativa subsp. japonica (Rice).